Here is a 271-residue protein sequence, read N- to C-terminus: Aminodeoxychorismate lyase (271 aa).

Residue Lys-140 is modified to N6-(pyridoxal phosphate)lysine.

This sequence belongs to the class-IV pyridoxal-phosphate-dependent aminotransferase family. In terms of assembly, homodimer. Pyridoxal 5'-phosphate serves as cofactor.

The enzyme catalyses 4-amino-4-deoxychorismate = 4-aminobenzoate + pyruvate + H(+). The protein operates within cofactor biosynthesis; tetrahydrofolate biosynthesis; 4-aminobenzoate from chorismate: step 2/2. Functionally, involved in the biosynthesis of p-aminobenzoate (PABA), a precursor of tetrahydrofolate. Converts 4-amino-4-deoxychorismate into 4-aminobenzoate (PABA) and pyruvate. The chain is Aminodeoxychorismate lyase (pabC) from Vibrio harveyi (Beneckea harveyi).